The following is a 442-amino-acid chain: Serine--tRNA ligase (442 aa).

Residue 249–251 (TSE) participates in L-serine binding. 280–282 (RSE) lines the ATP pocket. L-serine is bound at residue Glu303. 367 to 370 (EISS) is an ATP binding site. Ser402 contacts L-serine.

The protein belongs to the class-II aminoacyl-tRNA synthetase family. Type-1 seryl-tRNA synthetase subfamily. Homodimer. The tRNA molecule binds across the dimer.

The protein localises to the cytoplasm. The catalysed reaction is tRNA(Ser) + L-serine + ATP = L-seryl-tRNA(Ser) + AMP + diphosphate + H(+). It catalyses the reaction tRNA(Sec) + L-serine + ATP = L-seryl-tRNA(Sec) + AMP + diphosphate + H(+). It functions in the pathway aminoacyl-tRNA biosynthesis; selenocysteinyl-tRNA(Sec) biosynthesis; L-seryl-tRNA(Sec) from L-serine and tRNA(Sec): step 1/1. Functionally, catalyzes the attachment of serine to tRNA(Ser). Is also able to aminoacylate tRNA(Sec) with serine, to form the misacylated tRNA L-seryl-tRNA(Sec), which will be further converted into selenocysteinyl-tRNA(Sec). This is Serine--tRNA ligase from Acidovorax sp. (strain JS42).